The primary structure comprises 747 residues: AMP deaminase 1 (747 aa).

Threonine 81 is modified (phosphothreonine). The residue at position 85 (serine 85) is a Phosphoserine. At tyrosine 216 the chain carries Phosphotyrosine. Zn(2+) contacts are provided by histidine 303 and histidine 305. Residues histidine 305 and 374-379 contribute to the substrate site; that span reads KFNDKY. A Phosphoserine modification is found at serine 441. Histidine 572 lines the Zn(2+) pocket. Glutamate 575 contacts substrate. Catalysis depends on histidine 594, which acts as the Proton acceptor. Aspartate 649 contributes to the Zn(2+) binding site. 650-653 is a substrate binding site; that stretch reads DPMQ.

The protein belongs to the metallo-dependent hydrolases superfamily. Adenosine and AMP deaminases family. In terms of assembly, homotetramer. Requires Zn(2+) as cofactor.

The catalysed reaction is AMP + H2O + H(+) = IMP + NH4(+). It functions in the pathway purine metabolism; IMP biosynthesis via salvage pathway; IMP from AMP: step 1/1. Functionally, AMP deaminase plays a critical role in energy metabolism. This is AMP deaminase 1 from Rattus norvegicus (Rat).